Consider the following 175-residue polypeptide: Peptide deformylase (175 aa).

Cys-96 and His-138 together coordinate Fe cation. The active site involves Glu-139. Fe cation is bound at residue His-142.

It belongs to the polypeptide deformylase family. Requires Fe(2+) as cofactor.

The enzyme catalyses N-terminal N-formyl-L-methionyl-[peptide] + H2O = N-terminal L-methionyl-[peptide] + formate. Removes the formyl group from the N-terminal Met of newly synthesized proteins. Requires at least a dipeptide for an efficient rate of reaction. N-terminal L-methionine is a prerequisite for activity but the enzyme has broad specificity at other positions. This chain is Peptide deformylase, found in Rhodopseudomonas palustris (strain BisB5).